A 148-amino-acid chain; its full sequence is MTPELNLKSLGAKTPYIFEYNSQLLEAFPNPNPNLDPLITLECKEFTSLCPITSQPDFGVIFIRYIPKDKMVESKSLKLYLFSYRNHGSFHESCINTILLDLVRLLEPKYLEVYGDFASRGGIAIKPFVNYAIKEYQGFKEKRLLNAK.

The active-site Thioimide intermediate is the cysteine 50. Residue aspartate 57 is the Proton donor of the active site. Residues 72–74 (VES) and 91–92 (HE) contribute to the substrate site.

The protein belongs to the GTP cyclohydrolase I family. QueF type 1 subfamily.

The protein localises to the cytoplasm. It carries out the reaction 7-aminomethyl-7-carbaguanine + 2 NADP(+) = 7-cyano-7-deazaguanine + 2 NADPH + 3 H(+). The protein operates within tRNA modification; tRNA-queuosine biosynthesis. Catalyzes the NADPH-dependent reduction of 7-cyano-7-deazaguanine (preQ0) to 7-aminomethyl-7-deazaguanine (preQ1). This Helicobacter pylori (strain P12) protein is NADPH-dependent 7-cyano-7-deazaguanine reductase.